Consider the following 359-residue polypeptide: Peptide chain release factor 1 (359 aa).

Residue Gln235 is modified to N5-methylglutamine. The disordered stretch occupies residues 282 to 306 (RQRADSERSADRKSQVGSGDRSERI).

This sequence belongs to the prokaryotic/mitochondrial release factor family. Post-translationally, methylated by PrmC. Methylation increases the termination efficiency of RF1.

Its subcellular location is the cytoplasm. Its function is as follows. Peptide chain release factor 1 directs the termination of translation in response to the peptide chain termination codons UAG and UAA. This chain is Peptide chain release factor 1, found in Rhizobium rhizogenes (strain K84 / ATCC BAA-868) (Agrobacterium radiobacter).